The chain runs to 387 residues: 1-deoxy-D-xylulose 5-phosphate reductoisomerase (387 aa).

5 residues coordinate NADPH: Thr10, Gly11, Ile13, Asn38, and Asn122. 1-deoxy-D-xylulose 5-phosphate is bound at residue Lys123. Residue Glu124 participates in NADPH binding. Asp148 provides a ligand contact to Mn(2+). 1-deoxy-D-xylulose 5-phosphate is bound by residues Ser149, Glu150, Ser174, and His197. Residue Glu150 participates in Mn(2+) binding. Residue Gly203 coordinates NADPH. Residues Ser210, Asn215, Lys216, and Glu219 each contribute to the 1-deoxy-D-xylulose 5-phosphate site. Glu219 provides a ligand contact to Mn(2+).

It belongs to the DXR family. Requires Mg(2+) as cofactor. Mn(2+) is required as a cofactor.

It carries out the reaction 2-C-methyl-D-erythritol 4-phosphate + NADP(+) = 1-deoxy-D-xylulose 5-phosphate + NADPH + H(+). The protein operates within isoprenoid biosynthesis; isopentenyl diphosphate biosynthesis via DXP pathway; isopentenyl diphosphate from 1-deoxy-D-xylulose 5-phosphate: step 1/6. Functionally, catalyzes the NADPH-dependent rearrangement and reduction of 1-deoxy-D-xylulose-5-phosphate (DXP) to 2-C-methyl-D-erythritol 4-phosphate (MEP). This is 1-deoxy-D-xylulose 5-phosphate reductoisomerase from Ehrlichia ruminantium (strain Gardel).